Consider the following 413-residue polypeptide: Putative competence-damage inducible protein (413 aa).

It belongs to the CinA family.

This Acetivibrio thermocellus (strain ATCC 27405 / DSM 1237 / JCM 9322 / NBRC 103400 / NCIMB 10682 / NRRL B-4536 / VPI 7372) (Clostridium thermocellum) protein is Putative competence-damage inducible protein.